The chain runs to 269 residues: Chymotrypsin-like elastase family member 3B (269 aa).

An N-terminal signal peptide occupies residues 1-16 (MLRLLSSLLLVALASG). Positions 17-27 (CGQPSHNPSSR) are cleaved as a propeptide — activation peptide. The Peptidase S1 domain occupies 28 to 267 (VVNGEEAVPH…FIDWIEETIA (240 aa)). Cysteine 57 and cysteine 73 are disulfide-bonded. Active-site charge relay system residues include histidine 72 and aspartate 122. 3 disulfide bridges follow: cysteine 156/cysteine 222, cysteine 187/cysteine 203, and cysteine 212/cysteine 243. The active-site Charge relay system is serine 216.

Belongs to the peptidase S1 family. Elastase subfamily.

The enzyme catalyses Preferential cleavage: Ala-|-Xaa. Does not hydrolyze elastin.. Efficient protease with alanine specificity but only little elastolytic activity. The polypeptide is Chymotrypsin-like elastase family member 3B (Cela3b) (Mus musculus (Mouse)).